Here is a 274-residue protein sequence, read N- to C-terminus: Penicillin-insensitive murein endopeptidase (274 aa).

Residues 1–19 (MNKTAIALLALLASSASLA) form the signal peptide. Intrachain disulfides connect C44–C265, C187–C235, and C216–C223. Zn(2+) is bound by residues H110, H113, D120, D147, H150, and H211. The interval 228–264 (LPPPGDGCGAELQSWFAPPKPGTTKPEKKTPSPLPPS) is disordered.

This sequence belongs to the peptidase M74 family. Dimer. It depends on Zn(2+) as a cofactor.

It localises to the periplasm. Its function is as follows. Murein endopeptidase that cleaves the D-alanyl-meso-2,6-diamino-pimelyl amide bond that connects peptidoglycan strands. Likely plays a role in the removal of murein from the sacculus. This chain is Penicillin-insensitive murein endopeptidase, found in Escherichia coli (strain 55989 / EAEC).